The primary structure comprises 188 residues: HTH-type transcriptional regulator LmrA (188 aa).

The HTH tetR-type domain maps to 4–64 (GDSREKILSA…IEAVNEMKEY (61 aa)). A DNA-binding region (H-T-H motif) is located at residues 27–46 (GLNQIIKESGAPKGSLYYHF).

Functionally, acts as a repressor of the lincomycin-resistance (lmrAB) and yxaGH operons. This Bacillus subtilis (strain 168) protein is HTH-type transcriptional regulator LmrA (lmrA).